The primary structure comprises 170 residues: Crossover junction endodeoxyribonuclease RuvC (170 aa).

Catalysis depends on residues D12, E72, and D144. 3 residues coordinate Mg(2+): D12, E72, and D144.

The protein belongs to the RuvC family. As to quaternary structure, homodimer which binds Holliday junction (HJ) DNA. The HJ becomes 2-fold symmetrical on binding to RuvC with unstacked arms; it has a different conformation from HJ DNA in complex with RuvA. In the full resolvosome a probable DNA-RuvA(4)-RuvB(12)-RuvC(2) complex forms which resolves the HJ. Mg(2+) is required as a cofactor.

The protein localises to the cytoplasm. It carries out the reaction Endonucleolytic cleavage at a junction such as a reciprocal single-stranded crossover between two homologous DNA duplexes (Holliday junction).. In terms of biological role, the RuvA-RuvB-RuvC complex processes Holliday junction (HJ) DNA during genetic recombination and DNA repair. Endonuclease that resolves HJ intermediates. Cleaves cruciform DNA by making single-stranded nicks across the HJ at symmetrical positions within the homologous arms, yielding a 5'-phosphate and a 3'-hydroxyl group; requires a central core of homology in the junction. The consensus cleavage sequence is 5'-(A/T)TT(C/G)-3'. Cleavage occurs on the 3'-side of the TT dinucleotide at the point of strand exchange. HJ branch migration catalyzed by RuvA-RuvB allows RuvC to scan DNA until it finds its consensus sequence, where it cleaves and resolves the cruciform DNA. The protein is Crossover junction endodeoxyribonuclease RuvC of Nitrobacter hamburgensis (strain DSM 10229 / NCIMB 13809 / X14).